Reading from the N-terminus, the 147-residue chain is UPF0306 protein YhbP (147 aa).

Belongs to the UPF0306 family.

This is UPF0306 protein YhbP from Escherichia coli O157:H7 (strain EC4115 / EHEC).